The sequence spans 210 residues: Imidazole glycerol phosphate synthase subunit HisH (210 aa).

The Glutamine amidotransferase type-1 domain maps to K7 to M210. The Nucleophile role is filled by C82. Active-site residues include H192 and E194.

In terms of assembly, heterodimer of HisH and HisF.

It localises to the cytoplasm. The enzyme catalyses 5-[(5-phospho-1-deoxy-D-ribulos-1-ylimino)methylamino]-1-(5-phospho-beta-D-ribosyl)imidazole-4-carboxamide + L-glutamine = D-erythro-1-(imidazol-4-yl)glycerol 3-phosphate + 5-amino-1-(5-phospho-beta-D-ribosyl)imidazole-4-carboxamide + L-glutamate + H(+). It catalyses the reaction L-glutamine + H2O = L-glutamate + NH4(+). It participates in amino-acid biosynthesis; L-histidine biosynthesis; L-histidine from 5-phospho-alpha-D-ribose 1-diphosphate: step 5/9. Functionally, IGPS catalyzes the conversion of PRFAR and glutamine to IGP, AICAR and glutamate. The HisH subunit catalyzes the hydrolysis of glutamine to glutamate and ammonia as part of the synthesis of IGP and AICAR. The resulting ammonia molecule is channeled to the active site of HisF. This is Imidazole glycerol phosphate synthase subunit HisH from Photobacterium profundum (strain SS9).